Reading from the N-terminus, the 554-residue chain is Urocanate hydratase (554 aa).

NAD(+) contacts are provided by residues 51–52 (GG), Gln129, 175–177 (GMG), Glu195, Arg200, 241–242 (NA), 262–266 (QTSAH), 272–273 (YL), and Tyr321. Cys409 is a catalytic residue. Residue Gly491 coordinates NAD(+).

The protein belongs to the urocanase family. NAD(+) serves as cofactor.

The protein resides in the cytoplasm. It carries out the reaction 4-imidazolone-5-propanoate = trans-urocanate + H2O. It functions in the pathway amino-acid degradation; L-histidine degradation into L-glutamate; N-formimidoyl-L-glutamate from L-histidine: step 2/3. Catalyzes the conversion of urocanate to 4-imidazolone-5-propionate. This Caulobacter sp. (strain K31) protein is Urocanate hydratase.